A 101-amino-acid chain; its full sequence is Small ribosomal subunit protein uS14 (101 aa).

Residues 1–11 (MAKKSSVEKNN) are compositionally biased toward basic and acidic residues. Residues 1 to 22 (MAKKSSVEKNNRRQRMVKNAAA) form a disordered region. Residues 12-22 (RRQRMVKNAAA) show a composition bias toward basic residues.

The protein belongs to the universal ribosomal protein uS14 family. In terms of assembly, part of the 30S ribosomal subunit. Contacts proteins S3 and S10.

Binds 16S rRNA, required for the assembly of 30S particles and may also be responsible for determining the conformation of the 16S rRNA at the A site. This Afipia carboxidovorans (strain ATCC 49405 / DSM 1227 / KCTC 32145 / OM5) (Oligotropha carboxidovorans) protein is Small ribosomal subunit protein uS14.